A 429-amino-acid polypeptide reads, in one-letter code: Glucose-1-phosphate adenylyltransferase (429 aa).

Alpha-D-glucose 1-phosphate-binding positions include Gly162, Glu177–Lys178, and Ser209.

Belongs to the bacterial/plant glucose-1-phosphate adenylyltransferase family. Homotetramer.

It carries out the reaction alpha-D-glucose 1-phosphate + ATP + H(+) = ADP-alpha-D-glucose + diphosphate. The protein operates within glycan biosynthesis; glycogen biosynthesis. Its function is as follows. Involved in the biosynthesis of ADP-glucose, a building block required for the elongation reactions to produce glycogen. Catalyzes the reaction between ATP and alpha-D-glucose 1-phosphate (G1P) to produce pyrophosphate and ADP-Glc. This chain is Glucose-1-phosphate adenylyltransferase, found in Picosynechococcus sp. (strain ATCC 27264 / PCC 7002 / PR-6) (Agmenellum quadruplicatum).